The primary structure comprises 252 residues: Triosephosphate isomerase (252 aa).

Position 9 to 11 (9 to 11 (NWK)) interacts with substrate. The Electrophile role is filled by histidine 98. The active-site Proton acceptor is glutamate 170. Substrate contacts are provided by glycine 176 and serine 215.

This sequence belongs to the triosephosphate isomerase family. In terms of assembly, homodimer.

It is found in the cytoplasm. The catalysed reaction is D-glyceraldehyde 3-phosphate = dihydroxyacetone phosphate. The protein operates within carbohydrate biosynthesis; gluconeogenesis. It functions in the pathway carbohydrate degradation; glycolysis; D-glyceraldehyde 3-phosphate from glycerone phosphate: step 1/1. Involved in the gluconeogenesis. Catalyzes stereospecifically the conversion of dihydroxyacetone phosphate (DHAP) to D-glyceraldehyde-3-phosphate (G3P). The polypeptide is Triosephosphate isomerase (Buchnera aphidicola subsp. Baizongia pistaciae (strain Bp)).